The following is a 412-amino-acid chain: Mannose-1-phosphate guanylyltransferase regulatory subunit alpha (412 aa).

Residues 6-259 (TKAIILVGGP…VGFWRQIKNA (254 aa)) form a substrate-binding domain region. GDP-alpha-D-mannose-binding residues include Glu88 and Gln255. The interval 281–412 (LKKGNNIIGN…DRNYNNEIIL (132 aa)) is hexapeptide repeat domain.

It belongs to the transferase hexapeptide repeat family. As to quaternary structure, component of the GMPPA-GMPPB mannose-1-phosphate guanylyltransferase complex composed of 4 gmppA subunits and 8 gmppB subunits; the complex is organized into three layers, a central layer made up of 2 gmppA dimers sandwiched between two layers each made up of 2 gmppB dimers.

In terms of biological role, regulatory subunit of the GMPPA-GMPPB mannose-1-phosphate guanylyltransferase complex; reduces the catalytic activity of GMPPB when part of the complex. Mediates allosteric feedback inhibition of GMPPB catalytic activity upon binding GDP-alpha-D-mannose. Together with GMPPB regulates GDP-alpha-D-mannose levels. The polypeptide is Mannose-1-phosphate guanylyltransferase regulatory subunit alpha (gmppA) (Dictyostelium discoideum (Social amoeba)).